The following is a 521-amino-acid chain: Colicin-E1* (521 aa).

Disordered stretches follow at residues 26 to 52 (NGNPDGSGSGGGGGTGGSKSESSAAIH) and 127 to 163 (SGCALQKQKKKPVKKRKRAEKSFQEAEQRRKEIEKEQ). Positions 30–42 (DGSGSGGGGGTGG) are enriched in gly residues. Over residues 133–145 (KQKKKPVKKRKRA) the composition is skewed to basic residues. A compositionally biased stretch (basic and acidic residues) spans 146–163 (EKSFQEAEQRRKEIEKEQ). Helical transmembrane passes span 470 to 486 (AVDAGVSYVVVLLFSVL) and 493 to 509 (IWGIAIVTGILCAFIDK).

Belongs to the channel forming colicin family.

It localises to the cell membrane. This colicin is a channel-forming colicin. This class of transmembrane toxins depolarize the cytoplasmic membrane, leading to dissipation of cellular energy. Its function is as follows. Colicins are polypeptide toxins produced by and active against E.coli and closely related bacteria. This is Colicin-E1* (cea) from Shigella sonnei.